The primary structure comprises 148 residues: MPKSRPKRTIASSSSVFYGSSPFQNDGYIKVMELVSHIVIEINHSPTATTDETRKQNNPELKVKEPVCNLKKWENNTNFILEDHTKNKTKLSSTDRIRKWFRRHILKEEIEILSHGKQLSSIDEDYCPSNVLVGCSRDLNKLRSFQNF.

This is an uncharacterized protein from Saccharomyces cerevisiae (strain ATCC 204508 / S288c) (Baker's yeast).